Consider the following 244-residue polypeptide: 3-deoxy-manno-octulosonate cytidylyltransferase (244 aa).

It belongs to the KdsB family.

It localises to the cytoplasm. It catalyses the reaction 3-deoxy-alpha-D-manno-oct-2-ulosonate + CTP = CMP-3-deoxy-beta-D-manno-octulosonate + diphosphate. It participates in nucleotide-sugar biosynthesis; CMP-3-deoxy-D-manno-octulosonate biosynthesis; CMP-3-deoxy-D-manno-octulosonate from 3-deoxy-D-manno-octulosonate and CTP: step 1/1. The protein operates within bacterial outer membrane biogenesis; lipopolysaccharide biosynthesis. Functionally, activates KDO (a required 8-carbon sugar) for incorporation into bacterial lipopolysaccharide in Gram-negative bacteria. The sequence is that of 3-deoxy-manno-octulosonate cytidylyltransferase from Vesicomyosocius okutanii subsp. Calyptogena okutanii (strain HA).